Reading from the N-terminus, the 81-residue chain is Cell division protein ZapB (81 aa).

A coiled-coil region spans residues 5 to 81 (LEVFEKLESK…QALLGRMEEV (77 aa)). The interval 43–64 (VQSAQHGREELERENSQLKEQQ) is disordered. A compositionally biased stretch (basic and acidic residues) spans 48-59 (HGREELERENSQ).

Belongs to the ZapB family. In terms of assembly, homodimer. The ends of the coiled-coil dimer bind to each other, forming polymers. Interacts with FtsZ.

It localises to the cytoplasm. Its function is as follows. Non-essential, abundant cell division factor that is required for proper Z-ring formation. It is recruited early to the divisome by direct interaction with FtsZ, stimulating Z-ring assembly and thereby promoting cell division earlier in the cell cycle. Its recruitment to the Z-ring requires functional FtsA or ZipA. The protein is Cell division protein ZapB of Klebsiella pneumoniae subsp. pneumoniae (strain ATCC 700721 / MGH 78578).